A 173-amino-acid polypeptide reads, in one-letter code: Gonadotropin inhibitory hormone peptides (173 aa).

The first 26 residues, 1–26, serve as a signal peptide directing secretion; the sequence is MEIISTQKFILLTLATVAFLTPHGAC. A propeptide spanning residues 27-82 is cleaved from the precursor; sequence LDELMKSSLESREDDDDKYYETKDSILEEKQRSLNFEEMKDWGSKNFMKVNTPTVN. Phenylalanine 95 is subject to Phenylalanine amide. Residues 98-103 constitute a propeptide that is removed on maturation; it reads SNPEER. Residue phenylalanine 115 is modified to Phenylalanine amide. A propeptide spanning residues 118–140 is cleaved from the precursor; that stretch reads AFGESLSRRAPNLSNRSGRSPLA. Residue phenylalanine 154 is modified to Phenylalanine amide. Positions 157–173 are excised as a propeptide; the sequence is SVPISLSQGVQESEPGM.

It belongs to the FARP (FMRFamide related peptide) family. In terms of tissue distribution, specifically expressed in the diencephalon.

The protein resides in the secreted. Its function is as follows. Hypothalamic factor, responsible for the negative regulation of gonadotropin secretion. The polypeptide is Gonadotropin inhibitory hormone peptides (GNIH) (Coturnix japonica (Japanese quail)).